A 104-amino-acid chain; its full sequence is Large ribosomal subunit protein cL38 (104 aa).

Residues 1–39 (MASVSSIFGCGVSMAPNSSLRNKAIRTERRSACGGLLIE) constitute a chloroplast transit peptide. The interval 42–76 (SRPQKKSTAHHMKTRPRKSRLSDRNRKPTVYAPLP) is disordered. Basic residues predominate over residues 44 to 60 (PQKKSTAHHMKTRPRKS).

It belongs to the chloroplast-specific ribosomal protein cL38 family. In terms of assembly, part of the 50S ribosomal subunit.

Its subcellular location is the plastid. It is found in the chloroplast. The chain is Large ribosomal subunit protein cL38 (PSRP6) from Pisum sativum (Garden pea).